We begin with the raw amino-acid sequence, 490 residues long: Kinetochore protein Nuf2 homolog (490 aa).

Coiled coils occupy residues 146–280 (DRKF…KLEA) and 310–407 (DLID…SETI). Disordered regions lie at residues 346 to 365 (QSET…EERQ) and 468 to 490 (IDAG…SVFK).

The protein belongs to the NUF2 family. Component of the NDC80 complex, which is composed of at least ndc-80 and him-10. The NDC80 complex interacts with knl-1.

It localises to the nucleus. Its subcellular location is the chromosome. The protein localises to the centromere. It is found in the kinetochore. Its function is as follows. Acts as a component of the essential kinetochore-associated NDC80 complex, which is required for chromosome segregation in mitosis and meiosis and spindle checkpoint activity. The ndc-80 complex synergistically enhances the affinity of the ska-1 complex for microtubules and may allow the ndc-80 complex to track depolymerizing microtubules. In Caenorhabditis elegans, this protein is Kinetochore protein Nuf2 homolog (him-10).